The primary structure comprises 193 residues: Recombination protein RecR (193 aa).

A C4-type; degenerate zinc finger spans residues 61-76; that stretch reads CASCNALSETEVSEIC. The Toprim domain maps to 84–170; sequence SQLCMVLHPR…TFTKIAQGVP (87 aa).

The protein belongs to the RecR family.

Its function is as follows. May play a role in DNA repair. It seems to be involved in an RecBC-independent recombinational process of DNA repair. It may act with RecF and RecO. In Helicobacter pylori (strain J99 / ATCC 700824) (Campylobacter pylori J99), this protein is Recombination protein RecR.